The following is a 122-amino-acid chain: Large ribosomal subunit protein uL14 (122 aa).

Belongs to the universal ribosomal protein uL14 family. Part of the 50S ribosomal subunit. Forms a cluster with proteins L3 and L19. In the 70S ribosome, L14 and L19 interact and together make contacts with the 16S rRNA in bridges B5 and B8.

Functionally, binds to 23S rRNA. Forms part of two intersubunit bridges in the 70S ribosome. This is Large ribosomal subunit protein uL14 from Paramagnetospirillum magneticum (strain ATCC 700264 / AMB-1) (Magnetospirillum magneticum).